Reading from the N-terminus, the 133-residue chain is Fatty acid-binding protein, heart (133 aa).

The residue at position 2 (A2) is an N-acetylalanine. Residue T8 is modified to Phosphothreonine. A Phosphotyrosine; by Tyr-kinases modification is found at Y20. S23 carries the post-translational modification Phosphoserine. T30 is subject to Phosphothreonine. At S83 the chain carries Phosphoserine. (9Z)-octadecenoate is bound at residue 127-129 (RTY). 127 to 129 (RTY) provides a ligand contact to hexadecanoate. 127-129 (RTY) lines the octadecanoate pocket.

Belongs to the calycin superfamily. Fatty-acid binding protein (FABP) family.

It localises to the cytoplasm. Its function is as follows. FABPs are thought to play a role in the intracellular transport of long-chain fatty acids and their acyl-CoA esters. The polypeptide is Fatty acid-binding protein, heart (Fabp3) (Mus musculus (Mouse)).